An 880-amino-acid chain; its full sequence is DNA mismatch repair protein MutS (880 aa).

635-642 (GPNMGGKS) serves as a coordination point for ATP.

This sequence belongs to the DNA mismatch repair MutS family.

Its function is as follows. This protein is involved in the repair of mismatches in DNA. It is possible that it carries out the mismatch recognition step. This protein has a weak ATPase activity. The polypeptide is DNA mismatch repair protein MutS (Nitrosomonas eutropha (strain DSM 101675 / C91 / Nm57)).